An 84-amino-acid chain; its full sequence is Small ribosomal subunit protein uS17 (84 aa).

The protein belongs to the universal ribosomal protein uS17 family. Part of the 30S ribosomal subunit.

In terms of biological role, one of the primary rRNA binding proteins, it binds specifically to the 5'-end of 16S ribosomal RNA. This chain is Small ribosomal subunit protein uS17, found in Citrobacter koseri (strain ATCC BAA-895 / CDC 4225-83 / SGSC4696).